The chain runs to 140 residues: Large ribosomal subunit protein bL17 (140 aa).

The disordered stretch occupies residues 120–140 (EDAKGQDSGPVMVDEDDFAEA).

The protein belongs to the bacterial ribosomal protein bL17 family. As to quaternary structure, part of the 50S ribosomal subunit. Contacts protein L32.

The sequence is that of Large ribosomal subunit protein bL17 from Erythrobacter litoralis (strain HTCC2594).